A 37-amino-acid chain; its full sequence is Large ribosomal subunit protein bL36 (37 aa).

It belongs to the bacterial ribosomal protein bL36 family.

This chain is Large ribosomal subunit protein bL36, found in Aquifex aeolicus (strain VF5).